The sequence spans 137 residues: Large ribosomal subunit protein uL16c (137 aa).

This sequence belongs to the universal ribosomal protein uL16 family. In terms of assembly, part of the 50S ribosomal subunit.

It is found in the plastid. The protein localises to the chloroplast. The chain is Large ribosomal subunit protein uL16c from Thalassiosira pseudonana (Marine diatom).